Here is a 214-residue protein sequence, read N- to C-terminus: NAD(P)H-quinone oxidoreductase subunit 5, chloroplastic (214 aa).

A run of 2 helical transmembrane segments spans residues 84–104 and 152–172; these read LFPLLILLLFTFFIGFIGIPF and SLAILGLFIAYIFYGSAYSFF.

The protein belongs to the complex I subunit 5 family. In terms of assembly, NDH is composed of at least 16 different subunits, 5 of which are encoded in the nucleus.

The protein localises to the plastid. It is found in the chloroplast thylakoid membrane. It carries out the reaction a plastoquinone + NADH + (n+1) H(+)(in) = a plastoquinol + NAD(+) + n H(+)(out). The catalysed reaction is a plastoquinone + NADPH + (n+1) H(+)(in) = a plastoquinol + NADP(+) + n H(+)(out). In terms of biological role, NDH shuttles electrons from NAD(P)H:plastoquinone, via FMN and iron-sulfur (Fe-S) centers, to quinones in the photosynthetic chain and possibly in a chloroplast respiratory chain. The immediate electron acceptor for the enzyme in this species is believed to be plastoquinone. Couples the redox reaction to proton translocation, and thus conserves the redox energy in a proton gradient. This is NAD(P)H-quinone oxidoreductase subunit 5, chloroplastic (ndhF) from Brachypodium sylvaticum (False brome).